We begin with the raw amino-acid sequence, 240 residues long: Eukaryotic translation initiation factor 3 subunit K (240 aa).

The PCI domain maps to 41-221; the sequence is YDKDIVLTIL…TIKTRNIDEK (181 aa).

Belongs to the eIF-3 subunit K family. As to quaternary structure, component of the eukaryotic translation initiation factor 3 (eIF-3) complex.

It localises to the cytoplasm. In terms of biological role, component of the eukaryotic translation initiation factor 3 (eIF-3) complex, which is involved in protein synthesis of a specialized repertoire of mRNAs and, together with other initiation factors, stimulates binding of mRNA and methionyl-tRNAi to the 40S ribosome. The eIF-3 complex specifically targets and initiates translation of a subset of mRNAs involved in cell proliferation. The sequence is that of Eukaryotic translation initiation factor 3 subunit K from Caenorhabditis elegans.